Reading from the N-terminus, the 397-residue chain is UPF0761 membrane protein Kkor_1635 (397 aa).

Transmembrane regions (helical) follow at residues 36–56 (MLAL…FPSF), 92–112 (NLSA…MRSI), 132–152 (ILAY…SLAA), 168–188 (ILTF…LYMV), 201–221 (IAAV…AIFV), and 237–257 (IPIF…GVIV).

Belongs to the UPF0761 family.

It localises to the cell inner membrane. This chain is UPF0761 membrane protein Kkor_1635, found in Kangiella koreensis (strain DSM 16069 / JCM 12317 / KCTC 12182 / SW-125).